The following is a 259-amino-acid chain: Glutamate 5-kinase (259 aa).

Residue K18 coordinates ATP. Substrate is bound by residues S54, D141, and N153. Residue 173–174 (SD) coordinates ATP.

This sequence belongs to the glutamate 5-kinase family.

It is found in the cytoplasm. It carries out the reaction L-glutamate + ATP = L-glutamyl 5-phosphate + ADP. It functions in the pathway amino-acid biosynthesis; L-proline biosynthesis; L-glutamate 5-semialdehyde from L-glutamate: step 1/2. Its function is as follows. Catalyzes the transfer of a phosphate group to glutamate to form L-glutamate 5-phosphate. The chain is Glutamate 5-kinase from Clavibacter sepedonicus (Clavibacter michiganensis subsp. sepedonicus).